Here is a 92-residue protein sequence, read N- to C-terminus: Small ribosomal subunit protein uS19c (92 aa).

Belongs to the universal ribosomal protein uS19 family.

The protein localises to the plastid. It localises to the chloroplast. Functionally, protein S19 forms a complex with S13 that binds strongly to the 16S ribosomal RNA. This chain is Small ribosomal subunit protein uS19c (rps19), found in Marchantia polymorpha (Common liverwort).